A 544-amino-acid polypeptide reads, in one-letter code: CTP synthase (544 aa).

The interval 1–265 (MTKFIFVTGG…DNIITEQLQL (265 aa)) is amidoligase domain. Serine 13 is a CTP binding site. Serine 13 provides a ligand contact to UTP. ATP is bound by residues 14-19 (SLGKGI) and aspartate 71. Mg(2+)-binding residues include aspartate 71 and glutamate 139. Residues 146 to 148 (DIE), 186 to 191 (KTKPTQ), and lysine 222 each bind CTP. UTP is bound by residues 186-191 (KTKPTQ) and lysine 222. The region spanning 290 to 544 (KIAMVGKYVD…VKAALNNKKA (255 aa)) is the Glutamine amidotransferase type-1 domain. Position 353 (glycine 353) interacts with L-glutamine. Catalysis depends on cysteine 380, which acts as the Nucleophile; for glutamine hydrolysis. L-glutamine contacts are provided by residues 381–384 (LGMQ), glutamate 404, and arginine 471. Catalysis depends on residues histidine 517 and glutamate 519.

It belongs to the CTP synthase family. In terms of assembly, homotetramer.

The catalysed reaction is UTP + L-glutamine + ATP + H2O = CTP + L-glutamate + ADP + phosphate + 2 H(+). It catalyses the reaction L-glutamine + H2O = L-glutamate + NH4(+). The enzyme catalyses UTP + NH4(+) + ATP = CTP + ADP + phosphate + 2 H(+). It functions in the pathway pyrimidine metabolism; CTP biosynthesis via de novo pathway; CTP from UDP: step 2/2. Allosterically activated by GTP, when glutamine is the substrate; GTP has no effect on the reaction when ammonia is the substrate. The allosteric effector GTP functions by stabilizing the protein conformation that binds the tetrahedral intermediate(s) formed during glutamine hydrolysis. Inhibited by the product CTP, via allosteric rather than competitive inhibition. Catalyzes the ATP-dependent amination of UTP to CTP with either L-glutamine or ammonia as the source of nitrogen. Regulates intracellular CTP levels through interactions with the four ribonucleotide triphosphates. This is CTP synthase from Neisseria gonorrhoeae (strain ATCC 700825 / FA 1090).